The following is a 1159-amino-acid chain: RNA-directed RNA polymerase (1159 aa).

Residues 545 to 727 form the RdRp catalytic domain; sequence LTYGVLAEDT…KALASYTGLE (183 aa).

This sequence belongs to the reoviridae RNA-directed RNA polymerase family. As to quaternary structure, interacts with VP3 (Potential). Interacts with VP2 (Potential). Interacts with NSP5; this interaction is probably necessary for the formation of functional virus factories.

The protein resides in the virion. It carries out the reaction RNA(n) + a ribonucleoside 5'-triphosphate = RNA(n+1) + diphosphate. Functionally, RNA-directed RNA polymerase that is involved in both transcription and genome replication. Together with VP3 capping enzyme, forms an enzyme complex positioned near the channels situated at each of the five-fold vertices of the core. Following infection, the outermost layer of the virus is lost, leaving a double-layered particle (DLP) made up of the core and VP6 shell. VP1 then catalyzes the transcription of fully conservative plus-strand genomic RNAs that are extruded through the DLP's channels into the cytoplasm where they function as mRNAs for translation of viral proteins. One copy of each of the viral (+)RNAs is also recruited during core assembly, together with newly synthesized polymerase complexes and VP2. The polymerase of these novo-formed particles catalyzes the synthesis of complementary minus-strands leading to dsDNA formation. To do so, the polymerase specifically recognizes conserved 3' sequence(s) in plus-strand RNA templates. Once dsRNA synthesis is complete, the polymerase switches to the transcriptional mode, thus providing secondary transcription. This is RNA-directed RNA polymerase from Homo sapiens (Human).